We begin with the raw amino-acid sequence, 591 residues long: MVPSSPAVEKQVPVEPGPDPELRSWRHLVCYLCFYGFMAQIRPGESFITPYLLGPDKNFTREQVTNEITPVLSYSYLAVLVPVFLLTDYLRYTPVLLLQGLSFVSVWLLLLLGHSVAHMQLMELFYSVTMAARIAYSSYIFSLVRPARYQRVAGYSRAAVLLGVFTSSVLGQLLVTVGRVSFSTLNYISLAFLTFSVVLALFLKRPKRSLFFNRDDRGRCETSASELERMNPGPGGKLGHALRVACGDSVLARMLRELGDSLRRPQLRLWSLWWVFNSAGYYLVVYYVHILWNEVDPTTNSARVYNGAADAASTLLGAITSFAAGFVKIRWARWSKLLIAGVTATQAGLVFLLAHTRHPSSIWLCYAAFVLFRGSYQFLVPIATFQIASSLSKELCALVFGVNTFFATIVKTIITFIVSDVRGLGLPVRKQFQLYSVYFLILSIIYFLGAMLDGLRHCQRGHHPRQPPAQGLRSAAEEKAAQALSVQDKGLGGLQPAQSPPLSPEDSLGAVGPASLEQRQSDPYLAQAPAPQAAEFLSPVTTPSPCTLCSAQASGPEAADETCPQLAVHPPGVSKLGLQCLPSDGVQNVNQ.

N-acetylmethionine is present on M1. The Cytoplasmic segment spans residues M1–V29. S5 bears the Phosphoserine mark. The helical transmembrane segment at C30–P50 threads the bilayer. I48 and T49 together coordinate folate. The Extracellular segment spans residues Y51–V64. N58 carries an N-linked (GlcNAc...) asparagine glycan. A helical membrane pass occupies residues T65–T87. At D88–R91 the chain is on the cytoplasmic side. Residues Y92–L112 form a helical membrane-spanning segment. Topologically, residues G113–V116 are extracellular. The helical transmembrane segment at A117–Y139 threads the bilayer. Residues E123 and R133 each coordinate folate. Residues R133, I134, S137, Y149, and R157 each contribute to the 2',3'-cGAMP site. Residues I140–A153 are Cytoplasmic-facing. A helical membrane pass occupies residues G154–G178. V164 serves as a coordination point for folate. Residues R179 to S183 lie on the Extracellular side of the membrane. The chain crosses the membrane as a helical span at residues T184–F202. Topologically, residues L203–Q266 are cytoplasmic. S225 carries the phosphoserine modification. The helical transmembrane segment at L267 to W292 threads the bilayer. Positions 281, 282, and 286 each coordinate folate. 2',3'-cGAMP is bound at residue Y282. Over N293–V304 the chain is Extracellular. Residues Y305 to V327 traverse the membrane as a helical segment. Position 321 (S321) interacts with 2',3'-cGAMP. Residues K328–R333 are Cytoplasmic-facing. A helical membrane pass occupies residues W334–A354. Over H355–S360 the chain is Extracellular. Residues S361–T384 form a helical membrane-spanning segment. Residues R373 and Q377 each contribute to the folate site. The 2',3'-cGAMP site is built by Q377, P381, T384, K393, C396, and F400. The Cytoplasmic segment spans residues F385–L398. Residues V399 to R422 traverse the membrane as a helical segment. A required for substrate-binding region spans residues A407–S419. Topologically, residues G423–K430 are extracellular. The helical transmembrane segment at Q431 to L455 threads the bilayer. Residues R456–Q591 are Cytoplasmic-facing. Residues S474, S485, S499, and S503 each carry the phosphoserine modification.

This sequence belongs to the reduced folate carrier (RFC) transporter (TC 2.A.48) family. As to expression, placenta, liver, and to a much smaller extent, in lung.

It localises to the cell membrane. It is found in the apical cell membrane. The protein resides in the basolateral cell membrane. It catalyses the reaction 5-amino-1-(5-phospho-beta-D-ribosyl)imidazole-4-carboxamide(in) + (6S)-5-methyl-5,6,7,8-tetrahydrofolate(out) = 5-amino-1-(5-phospho-beta-D-ribosyl)imidazole-4-carboxamide(out) + (6S)-5-methyl-5,6,7,8-tetrahydrofolate(in). The enzyme catalyses 2',3'-cGAMP(out) + 5-amino-1-(5-phospho-beta-D-ribosyl)imidazole-4-carboxamide(in) = 2',3'-cGAMP(in) + 5-amino-1-(5-phospho-beta-D-ribosyl)imidazole-4-carboxamide(out). It carries out the reaction 3',3'-cGAMP(out) + 5-amino-1-(5-phospho-beta-D-ribosyl)imidazole-4-carboxamide(in) = 3',3'-cGAMP(in) + 5-amino-1-(5-phospho-beta-D-ribosyl)imidazole-4-carboxamide(out). Antiporter that mediates the import of reduced folates or a subset of cyclic dinucleotides, driven by the export of organic anions. Acts as an importer of immunoreactive cyclic dinucleotides, such as cyclic GMP-AMP (2'-3'-cGAMP), an immune messenger produced in response to DNA virus in the cytosol, and its linkage isomer 3'-3'-cGAMP, thus playing a role in triggering larger immune responses. Mechanistically, acts as a secondary active transporter, which exports intracellular organic anions down their concentration gradients to facilitate the uptake of its substrates. Has high affinity for N5-methyltetrahydrofolate, the predominant circulating form of folate. Also mediates the import of antifolate drug methotrexate. 5-amino-4-imidazolecarboxamide riboside (AICAR), when phosphorylated to AICAR monophosphate, can serve as an organic anion for antiporter activity. This chain is Reduced folate transporter, found in Homo sapiens (Human).